A 248-amino-acid polypeptide reads, in one-letter code: 1-(5-phosphoribosyl)-5-[(5-phosphoribosylamino)methylideneamino] imidazole-4-carboxamide isomerase (248 aa).

Residue Asp-8 is the Proton acceptor of the active site. Asp-131 (proton donor) is an active-site residue.

It belongs to the HisA/HisF family.

The protein localises to the cytoplasm. It carries out the reaction 1-(5-phospho-beta-D-ribosyl)-5-[(5-phospho-beta-D-ribosylamino)methylideneamino]imidazole-4-carboxamide = 5-[(5-phospho-1-deoxy-D-ribulos-1-ylimino)methylamino]-1-(5-phospho-beta-D-ribosyl)imidazole-4-carboxamide. The protein operates within amino-acid biosynthesis; L-histidine biosynthesis; L-histidine from 5-phospho-alpha-D-ribose 1-diphosphate: step 4/9. This chain is 1-(5-phosphoribosyl)-5-[(5-phosphoribosylamino)methylideneamino] imidazole-4-carboxamide isomerase, found in Cupriavidus taiwanensis (strain DSM 17343 / BCRC 17206 / CCUG 44338 / CIP 107171 / LMG 19424 / R1) (Ralstonia taiwanensis (strain LMG 19424)).